We begin with the raw amino-acid sequence, 129 residues long: Small ribosomal subunit protein uS11 (129 aa).

This sequence belongs to the universal ribosomal protein uS11 family. Part of the 30S ribosomal subunit. Interacts with proteins S7 and S18. Binds to IF-3.

In terms of biological role, located on the platform of the 30S subunit, it bridges several disparate RNA helices of the 16S rRNA. Forms part of the Shine-Dalgarno cleft in the 70S ribosome. The protein is Small ribosomal subunit protein uS11 of Bartonella quintana (strain Toulouse) (Rochalimaea quintana).